The chain runs to 64 residues: Large ribosomal subunit protein bL35 (64 aa).

Residues 1–28 (MSKAKTHSGAAKRFKKTASGYKHKHAFK) are compositionally biased toward basic residues. The disordered stretch occupies residues 1–51 (MSKAKTHSGAAKRFKKTASGYKHKHAFKSHILTKMTTKRKRQLRGTSLLNA).

It belongs to the bacterial ribosomal protein bL35 family.

The sequence is that of Large ribosomal subunit protein bL35 from Saccharophagus degradans (strain 2-40 / ATCC 43961 / DSM 17024).